Reading from the N-terminus, the 294-residue chain is Bifunctional protein FolD (294 aa).

NADP(+) contacts are provided by residues 175–177 and Ile-241; that span reads GAS.

The protein belongs to the tetrahydrofolate dehydrogenase/cyclohydrolase family. In terms of assembly, homodimer.

The catalysed reaction is (6R)-5,10-methylene-5,6,7,8-tetrahydrofolate + NADP(+) = (6R)-5,10-methenyltetrahydrofolate + NADPH. It catalyses the reaction (6R)-5,10-methenyltetrahydrofolate + H2O = (6R)-10-formyltetrahydrofolate + H(+). It participates in one-carbon metabolism; tetrahydrofolate interconversion. Its function is as follows. Catalyzes the oxidation of 5,10-methylenetetrahydrofolate to 5,10-methenyltetrahydrofolate and then the hydrolysis of 5,10-methenyltetrahydrofolate to 10-formyltetrahydrofolate. The protein is Bifunctional protein FolD of Hahella chejuensis (strain KCTC 2396).